A 201-amino-acid chain; its full sequence is MNELIYFDRKKRLESILNHIKKLDYDDLRQIKKAILQQEFELDFNSCIPIIFETKIKTMKYKSSHDNPNWEYSDGIKCKFKMEFDNDCSIDLYCEYTTYYDGGDLEYTDIDNNRSININIGQKTYTIDFDADNYQTIFVINNDALKLLDSLSIDKSDSNKKCLGILIYNIVGITKPEDYHESFDIMSCDNFDDIVFIYEPY.

The protein belongs to the mimivirus L885/R898 family.

This is an uncharacterized protein from Acanthamoeba polyphaga (Amoeba).